The following is a 400-amino-acid chain: EARP-interacting protein homolog (400 aa).

Positions 95–114 are disordered; sequence NNNSNNTNNNDNTNNNTNNN. Positions 96–114 are enriched in low complexity; it reads NNSNNTNNNDNTNNNTNNN. WD repeat units follow at residues 138 to 178, 227 to 267, and 271 to 311; these read GHTG…NEPT, AHSE…DPVK, and GHNH…SAFN. Over residues 314–333 the composition is skewed to low complexity; sequence NNISNSNEQQHSQQPNEQQP. A disordered region spans residues 314–348; it reads NNISNSNEQQHSQQPNEQQPQQPPQPVKQKKNKRN. One copy of the WD 4 repeat lies at 358–397; it reads EHEDSVYNISWSSSNFLFASLSYDGRFVVNNVPKEYSDIL.

This sequence belongs to the WD repeat EIPR1 family.

The sequence is that of EARP-interacting protein homolog from Dictyostelium discoideum (Social amoeba).